The chain runs to 539 residues: MVDDNGSSPEVEGAEGAGAPLLALLRVDGLNQTQTRSPSPSFFGSYNISEDVYFYFNGLPTSTELVLNATTSATSATLSPAMVATGGGGTTTPEPDLSEFLEALPNDRVGLLAFLFLFSFATVFGNSLVILAVIRERYLHTATNYFITSLAVADCLVGLVVMPFSALYEVLENTWFFGTDWCDIWRSLDVLFSTASILNLCVISLDRYWAITDPFSYPMRMTVKRAAGLIAAVWICSSAISFPAIVWWRAARDGEMPAYKCTFTEHLGYLVFSSTISFYLPLLVMVFTYCRIYRAAVIQTRSLKIGTKQVLMASGELQLTLRIHRGGTTRDQQNQVSGGGGGGGGGGGGGGSLSHSHSHSHHHHHNHGGGTTTSTPEEPDDEPLSALHNNGLARHRHMGKNFSLSRKLAKFAKEKKAAKTLGIVMGVFIICWLPFFVVNLLSGFCIECIEHEEIVSAIVTWLGWINSCMNPVIYACWSRDFRRAFVRLLCMCCPRKIRRKYQPTMRSKSQRFATRRCYSTCSLHGIQHVRHNSCEQTYI.

The Extracellular portion of the chain corresponds to 1-113; that stretch reads MVDDNGSSPE…LPNDRVGLLA (113 aa). N-linked (GlcNAc...) asparagine glycosylation is found at asparagine 5, asparagine 31, asparagine 47, and asparagine 68. The helical transmembrane segment at 114-134 threads the bilayer; sequence FLFLFSFATVFGNSLVILAVI. The Cytoplasmic segment spans residues 135–145; it reads RERYLHTATNY. Residues 146-166 form a helical membrane-spanning segment; it reads FITSLAVADCLVGLVVMPFSA. Residues 167–189 lie on the Extracellular side of the membrane; sequence LYEVLENTWFFGTDWCDIWRSLD. A disulfide bond links cysteine 182 and cysteine 261. A helical membrane pass occupies residues 190–206; sequence VLFSTASILNLCVISLD. Residues 207–227 lie on the Cytoplasmic side of the membrane; the sequence is RYWAITDPFSYPMRMTVKRAA. The helical transmembrane segment at 228–248 threads the bilayer; sequence GLIAAVWICSSAISFPAIVWW. Over 249–266 the chain is Extracellular; sequence RAARDGEMPAYKCTFTEH. Residues 267–287 form a helical membrane-spanning segment; sequence LGYLVFSSTISFYLPLLVMVF. Residues 288–420 lie on the Cytoplasmic side of the membrane; the sequence is TYCRIYRAAV…FAKEKKAAKT (133 aa). The disordered stretch occupies residues 326–387; sequence GGTTRDQQNQ…EPDDEPLSAL (62 aa). The segment covering 337–352 has biased composition (gly residues); the sequence is SGGGGGGGGGGGGGGS. A compositionally biased stretch (basic residues) spans 356–367; sequence SHSHSHHHHHNH. A helical membrane pass occupies residues 421–441; sequence LGIVMGVFIICWLPFFVVNLL. Residues 442 to 453 are Extracellular-facing; sequence SGFCIECIEHEE. The chain crosses the membrane as a helical span at residues 454–474; sequence IVSAIVTWLGWINSCMNPVIY. Residues 475–539 are Cytoplasmic-facing; sequence ACWSRDFRRA…RHNSCEQTYI (65 aa). S-palmitoyl cysteine attachment occurs at residues cysteine 492 and cysteine 493.

Belongs to the G-protein coupled receptor 1 family. As to expression, expressed in both central and peripheral nervous systems.

It is found in the cell membrane. Receptor for dopamine. The activity of this receptor is mediated by G proteins which activate adenylyl cyclase. Also capable of generating a calcium signal. In terms of antagonist responses, would be classed with the D1-like dopamine receptor group. This receptor is an attractive candidate for initiating biochemical cascades underlying olfactory learning. In Drosophila melanogaster (Fruit fly), this protein is Dopamine receptor 2 (Dop1R2).